The chain runs to 435 residues: Probable exopolygalacturonase B (435 aa).

Positions 1–15 (MKFFLATLFASAVSS) are cleaved as a signal peptide. N-linked (GlcNAc...) asparagine glycans are attached at residues N59, N184, and N224. 5 PbH1 repeats span residues 208–239 (SKDV…DSLN), 240–261 (VDGL…SPKP), 262–283 (NTTN…SMGS), 294–315 (IEHA…RLKA), and 326–347 (INNI…VLDQ). D254 (proton donor) is an active-site residue. A disulfide bridge connects residues C256 and C273. N-linked (GlcNAc...) asparagine glycans are attached at residues N262 and N274. H277 is a catalytic residue. N-linked (GlcNAc...) asparagine glycans are attached at residues N301, N328, N365, and N373. Residues 366–388 (VTNILFENISGTSSGKNGKVVAD) form a PbH1 6 repeat. The cysteines at positions 391 and 397 are disulfide-linked. N-linked (GlcNAc...) asparagine glycosylation occurs at N406.

It belongs to the glycosyl hydrolase 28 family.

It is found in the secreted. It carries out the reaction [(1-&gt;4)-alpha-D-galacturonosyl](n) + H2O = alpha-D-galacturonate + [(1-&gt;4)-alpha-D-galacturonosyl](n-1). Functionally, specific in hydrolyzing the terminal glycosidic bond of polygalacturonic acid and oligogalacturonates. This Aspergillus flavus (strain ATCC 200026 / FGSC A1120 / IAM 13836 / NRRL 3357 / JCM 12722 / SRRC 167) protein is Probable exopolygalacturonase B (pgxB).